The chain runs to 553 residues: MGSRSSTRIPVPLMLTVRVALALSCVCPTSSLDGRPLAAAGIVVTGDKAVNIYTSSQTGSIIVKLLPNMPKDKEACAKAPLEAYNRTLTTLLTPLGDSIRRIQESVTTSGGGKQGRLIGAIIGGAALGVATAAQITAASALILANQNAANILRLKESIAATNEAVHEVTDGLSQLAVAVGKMQQFVNDQFNKTAQELDCIKITQQVGVELNLYLTELTTVFGPQITSPALTQLTIQALYNLAGGNMDYLLTKLGVGNNQLSSLIGSGLITGNPILYDSQTQLLGIQVTLPSVGNLNNMRATYLETLSVSTTKGFASALVPKVVTQVGSVIEELDTSYCIETDLDLYCTRIVTFPMSPGIYSCLSGNTSACMYSKTEGALTTPYMTLKGSVIANCKMTTCRSADPPGIISQNYGEAVSLIDRQSCNVLSLDGITLRLSGEFDATYQKNISIQDSQVIVTGNLDISTELGNVNNSISNALDKLEESNSKLDKVNVKLTSTSALITYIVLTVISLVCGILSLVLACYLMYKQKAQQKTLLWLGNNTLDQMRATTKM.

The signal sequence occupies residues 1–31; sequence MGSRSSTRIPVPLMLTVRVALALSCVCPTSS. Residues 32 to 500 are Extracellular-facing; the sequence is LDGRPLAAAG…VNVKLTSTSA (469 aa). 4 cysteine pairs are disulfide-bonded: Cys-76/Cys-199, Cys-338/Cys-347, Cys-362/Cys-370, and Cys-394/Cys-399. Asn-85 is a glycosylation site (N-linked (GlcNAc...) asparagine; by host). The segment at 117–141 is fusion peptide; sequence LIGAIIGGAALGVATAAQITAASAL. Positions 142–170 form a coiled coil; that stretch reads ILANQNAANILRLKESIAATNEAVHEVTD. An N-linked (GlcNAc...) asparagine; by host glycan is attached at Asn-191. A glycan (N-linked (GlcNAc...) asparagine; by host) is linked at Asn-366. N-linked (GlcNAc...) asparagine; by host glycans are attached at residues Asn-447 and Asn-471. A coiled-coil region spans residues 466–491; it reads ELGNVNNSISNALDKLEESNSKLDKV. A helical membrane pass occupies residues 501-521; the sequence is LITYIVLTVISLVCGILSLVL. Over 522-553 the chain is Cytoplasmic; the sequence is ACYLMYKQKAQQKTLLWLGNNTLDQMRATTKM. Cys-523 carries the S-palmitoyl cysteine; by host lipid modification.

The protein belongs to the paramyxoviruses fusion glycoprotein family. In terms of assembly, homotrimer of disulfide-linked F1-F2. Post-translationally, the inactive precursor F0 is glycosylated and proteolytically cleaved into F1 and F2 to be functionally active. The cleavage is mediated by cellular proteases during the transport and maturation of the polypeptide.

The protein resides in the virion membrane. Its subcellular location is the host cell membrane. In terms of biological role, class I viral fusion protein. Under the current model, the protein has at least 3 conformational states: pre-fusion native state, pre-hairpin intermediate state, and post-fusion hairpin state. During viral and plasma cell membrane fusion, the heptad repeat (HR) regions assume a trimer-of-hairpins structure, positioning the fusion peptide in close proximity to the C-terminal region of the ectodomain. The formation of this structure appears to drive apposition and subsequent fusion of viral and plasma cell membranes. Directs fusion of viral and cellular membranes leading to delivery of the nucleocapsid into the cytoplasm. This fusion is pH independent and occurs directly at the outer cell membrane. The trimer of F1-F2 (F protein) probably interacts with HN at the virion surface. Upon HN binding to its cellular receptor, the hydrophobic fusion peptide is unmasked and interacts with the cellular membrane, inducing the fusion between cell and virion membranes. Later in infection, F proteins expressed at the plasma membrane of infected cells could mediate fusion with adjacent cells to form syncytia, a cytopathic effect that could lead to tissue necrosis. The polypeptide is Fusion glycoprotein F0 (F) (Gallus gallus (Chicken)).